The following is a 480-amino-acid chain: Glutamate--tRNA ligase (480 aa).

Positions 21–31 (PSPTGYLHVGG) match the 'HIGH' region motif. Zn(2+) contacts are provided by C110, C112, C137, and H139. A 'KMSKS' region motif is present at residues 248 to 252 (KLSKR). K251 lines the ATP pocket.

It belongs to the class-I aminoacyl-tRNA synthetase family. Glutamate--tRNA ligase type 1 subfamily. In terms of assembly, monomer. It depends on Zn(2+) as a cofactor.

The protein localises to the cytoplasm. The catalysed reaction is tRNA(Glu) + L-glutamate + ATP = L-glutamyl-tRNA(Glu) + AMP + diphosphate. Functionally, catalyzes the attachment of glutamate to tRNA(Glu) in a two-step reaction: glutamate is first activated by ATP to form Glu-AMP and then transferred to the acceptor end of tRNA(Glu). In Haemophilus influenzae (strain ATCC 51907 / DSM 11121 / KW20 / Rd), this protein is Glutamate--tRNA ligase.